The following is a 428-amino-acid chain: Glutamine synthetase, chloroplastic (428 aa).

The N-terminal 48 residues, 1–48 (MAQAVVPAMQCQVGAVRARPAAAAAAAGGRVWGVRRTGRGTSGFRVMA), are a transit peptide targeting the chloroplast. Residues 75 to 155 (IIAEYIWVGG…VMCDTYTPAG (81 aa)) enclose the GS beta-grasp domain. The tract at residues 95 to 120 (TISKPVEDPSELPKWNYDGSSTGQAP) is disordered. The 270-residue stretch at 159-428 (PTNKRNRAAQ…LAAKKLALKV (270 aa)) folds into the GS catalytic domain.

It belongs to the glutamine synthetase family. In terms of assembly, homooctamer.

It is found in the plastid. The protein resides in the chloroplast. The enzyme catalyses L-glutamate + NH4(+) + ATP = L-glutamine + ADP + phosphate + H(+). Its function is as follows. Light-modulated chloroplastic glutamine synthetase, encoded by a nuclear gene and expressed primarily in leaves, and which is responsible for the reassimilation of the ammonia generated by photorespiration. In Oryza sativa subsp. japonica (Rice), this protein is Glutamine synthetase, chloroplastic.